The sequence spans 341 residues: Ribulose-5-phosphate reductase 1 (341 aa).

C38, H64, E65, and E144 together coordinate Zn(2+).

It belongs to the zinc-containing alcohol dehydrogenase family. Heterodimer together with TarI. Can also form a dimer of heterodimers. Zn(2+) serves as cofactor.

It catalyses the reaction D-ribitol 5-phosphate + NADP(+) = D-ribulose 5-phosphate + NADPH + H(+). It participates in cell wall biogenesis; poly(ribitol phosphate) teichoic acid biosynthesis. Catalyzes the NADPH dependent reduction of D-ribulose 5-phosphate to D-ribitol 5-phosphate. This is Ribulose-5-phosphate reductase 1 from Staphylococcus aureus (strain NCTC 8325 / PS 47).